A 328-amino-acid polypeptide reads, in one-letter code: Ethanol acetyltransferase 1 (328 aa).

Positions 39–309 constitute an AB hydrolase-1 domain; the sequence is PAIINIHGLL…TGHNLLLENP (271 aa). Catalysis depends on charge relay system residues S115, D139, and H302.

Belongs to the AB hydrolase superfamily.

It is found in the mitochondrion. The catalysed reaction is ethanol + acetyl-CoA = ethyl acetate + CoA. It carries out the reaction acetyl-CoA + H2O = acetate + CoA + H(+). The enzyme catalyses ethyl acetate + H2O = ethanol + acetate + H(+). In terms of biological role, alcohol acetyltransferase that catalyzes the synthesis of ethyl acetate from ethanol and acetyl-CoA. Can also function as a thioesterase by hydrolyzing acetyl-CoA in the absence of ethanol, as well as esterase hydrolyzing ethyl acetate. The sequence is that of Ethanol acetyltransferase 1 from Saccharomyces cerevisiae (strain ATCC 204508 / S288c) (Baker's yeast).